Reading from the N-terminus, the 148-residue chain is MKYQQLENLEAGWKWTYLVKKWKEEEAITCHIDSSEAEAAIQSLLTIEHEPTKVIEWIDKHMSPALENKLKQAIRAKRKRHFNAEQVHTRKKSIDLDYRVWEKLAEKSQELGSTLSDTIEYLLSESNRTETVTKTVSDIRKDLSDLLD.

Belongs to the MatP family. As to quaternary structure, homodimer.

Its subcellular location is the cytoplasm. In terms of biological role, required for spatial organization of the terminus region of the chromosome (Ter macrodomain) during the cell cycle. Prevents early segregation of duplicated Ter macrodomains during cell division. Binds specifically to matS, which is a 13 bp signature motif repeated within the Ter macrodomain. The sequence is that of Macrodomain Ter protein from Photobacterium profundum (strain SS9).